We begin with the raw amino-acid sequence, 348 residues long: MGPRARPALFFLILLRTVAAQGRPPRSHSLRYLFMGASERDHGLPLFEALGYVDDELFVAYNHESRRAESRAQWVLGEAHSQLWLQLSQSLKGWDHMFIVDFWTIMDNHNHSKESHTLQVILGCEVQEDNSTRGFWKYGYDGQDHLEFCPETLDWRAAESRALTTKLEWEVNKIRAKQNRAYLERDCPEQLQWLLELGRGVLDQQVPPLVKVTHHVASAVTTLRCQALNFYPQNITMRWLKDRKPVDVKDAESKDVLPSGDGTYQSWVALAVPPGEEQRYTCQVEHPGLDQPLTATWEPSLSNTLVTGVISGIAVCVIIFLIGILFRILRKRQASRGAMGDYVLAECE.

The signal sequence occupies residues 1–22; the sequence is MGPRARPALFFLILLRTVAAQG. The interval 23–114 is alpha-1; that stretch reads RPPRSHSLRY…IMDNHNHSKE (92 aa). Over 23-306 the chain is Extracellular; the sequence is RPPRSHSLRY…WEPSLSNTLV (284 aa). N-linked (GlcNAc...) asparagine glycans are attached at residues Asn-110, Asn-130, and Asn-234. Positions 115 to 205 are alpha-2; sequence SHTLQVILGC…ELGRGVLDQQ (91 aa). Intrachain disulfides connect Cys-124-Cys-187 and Cys-225-Cys-282. Residues 206–297 form an alpha-3 region; the sequence is VPPLVKVTHH…GLDQPLTATW (92 aa). One can recognise an Ig-like C1-type domain in the interval 207 to 296; it reads PPLVKVTHHV…PGLDQPLTAT (90 aa). Residues 298–306 are connecting peptide; sequence EPSLSNTLV. Residues 307 to 330 form a helical membrane-spanning segment; that stretch reads TGVISGIAVCVIIFLIGILFRILR. Topologically, residues 331–348 are cytoplasmic; it reads KRQASRGAMGDYVLAECE.

The protein belongs to the MHC class I family. In terms of assembly, binds TFR through the extracellular domain in a pH-dependent manner.

The protein localises to the cell membrane. In terms of biological role, binds to transferrin receptor (TFR) and reduces its affinity for iron-loaded transferrin. In Dicerorhinus sumatrensis (Sumatran rhinoceros), this protein is Hereditary hemochromatosis protein homolog (HFE).